Consider the following 248-residue polypeptide: DNA repair protein RecO (248 aa).

Belongs to the RecO family.

Its function is as follows. Involved in DNA repair and RecF pathway recombination. In Bacillus cereus (strain 03BB102), this protein is DNA repair protein RecO.